The chain runs to 267 residues: NAD kinase (267 aa).

The active-site Proton acceptor is aspartate 45. NAD(+) contacts are provided by residues 45 to 46, 122 to 123, arginine 148, aspartate 150, 161 to 166, alanine 185, and glutamine 223; these read DG, NE, and TAYNKS.

This sequence belongs to the NAD kinase family. The cofactor is a divalent metal cation.

It is found in the cytoplasm. The enzyme catalyses NAD(+) + ATP = ADP + NADP(+) + H(+). Its function is as follows. Involved in the regulation of the intracellular balance of NAD and NADP, and is a key enzyme in the biosynthesis of NADP. Catalyzes specifically the phosphorylation on 2'-hydroxyl of the adenosine moiety of NAD to yield NADP. In Levilactobacillus brevis (strain ATCC 367 / BCRC 12310 / CIP 105137 / JCM 1170 / LMG 11437 / NCIMB 947 / NCTC 947) (Lactobacillus brevis), this protein is NAD kinase.